The following is a 797-amino-acid chain: Ubiquitin carboxyl-terminal hydrolase 14 (797 aa).

The segment at 156–266 adopts a UBP-type; degenerate zinc-finger fold; that stretch reads LISEHALTLQ…EHLAHFGIDF (111 aa). Positions 180, 183, 200, and 213 each coordinate Zn(2+). One can recognise a USP domain in the interval 308 to 796; that stretch reads TGLVNLGNSC…MGYVYFFQRL (489 aa). Catalysis depends on C317, which acts as the Nucleophile. UBA domains follow at residues 613–654 and 670–710; these read VANE…LLSH and DIDQ…VFNN. H758 acts as the Proton acceptor in catalysis.

Belongs to the peptidase C19 family. Constitutively and ubiquitously expressed (at protein level).

It carries out the reaction Thiol-dependent hydrolysis of ester, thioester, amide, peptide and isopeptide bonds formed by the C-terminal Gly of ubiquitin (a 76-residue protein attached to proteins as an intracellular targeting signal).. Recognizes and hydrolyzes the peptide bond at the C-terminal Gly of ubiquitin. Involved in the processing of poly-ubiquitin precursors as well as that of ubiquitinated proteins. Involved in seed and embryo development. The polypeptide is Ubiquitin carboxyl-terminal hydrolase 14 (UBP14) (Arabidopsis thaliana (Mouse-ear cress)).